A 101-amino-acid polypeptide reads, in one-letter code: Small ribosomal subunit protein uS14 (101 aa).

It belongs to the universal ribosomal protein uS14 family. As to quaternary structure, part of the 30S ribosomal subunit. Contacts proteins S3 and S10.

In terms of biological role, binds 16S rRNA, required for the assembly of 30S particles and may also be responsible for determining the conformation of the 16S rRNA at the A site. The polypeptide is Small ribosomal subunit protein uS14 (Francisella tularensis subsp. tularensis (strain FSC 198)).